A 314-amino-acid polypeptide reads, in one-letter code: Serine/threonine-protein phosphatase PP2A-5 catalytic subunit (314 aa).

Mn(2+)-binding residues include Asp-62, His-64, Asp-90, and Asn-122. Residue His-123 is the Proton donor of the active site. Mn(2+) is bound by residues His-172 and His-246.

This sequence belongs to the PPP phosphatase family. PP-2A subfamily. Requires Mn(2+) as cofactor.

Its subcellular location is the cytoplasm. The catalysed reaction is O-phospho-L-seryl-[protein] + H2O = L-seryl-[protein] + phosphate. The enzyme catalyses O-phospho-L-threonyl-[protein] + H2O = L-threonyl-[protein] + phosphate. The protein is Serine/threonine-protein phosphatase PP2A-5 catalytic subunit (NPP5) of Nicotiana tabacum (Common tobacco).